Reading from the N-terminus, the 289-residue chain is Protease HtpX homolog (289 aa).

Transmembrane regions (helical) follow at residues isoleucine 3–phenylalanine 23 and threonine 28–glycine 48. Histidine 129 is a Zn(2+) binding site. Glutamate 130 is an active-site residue. Histidine 133 is a binding site for Zn(2+). Helical transmembrane passes span leucine 144–glycine 164 and phenylalanine 172–isoleucine 192. Residue glutamate 197 coordinates Zn(2+). Residues serine 222–aspartate 250 are disordered. Residues arginine 235–glycine 246 are compositionally biased toward basic residues.

This sequence belongs to the peptidase M48B family. Zn(2+) is required as a cofactor.

It localises to the cell membrane. This is Protease HtpX homolog from Halobacterium salinarum (strain ATCC 700922 / JCM 11081 / NRC-1) (Halobacterium halobium).